Reading from the N-terminus, the 87-residue chain is Sec-independent protein translocase protein TatA (87 aa).

The helical transmembrane segment at 1 to 21 threads the bilayer; the sequence is MGSFSITHWLILLVVVVVVFG. The segment at 56-87 is disordered; sequence VLDHDAGTNPPNITGTQSDTTSANKVDDTHNV. Over residues 64–79 the composition is skewed to polar residues; the sequence is NPPNITGTQSDTTSAN.

The protein belongs to the TatA/E family. As to quaternary structure, the Tat system comprises two distinct complexes: a TatABC complex, containing multiple copies of TatA, TatB and TatC subunits, and a separate TatA complex, containing only TatA subunits. Substrates initially bind to the TatABC complex, which probably triggers association of the separate TatA complex to form the active translocon.

It is found in the cell inner membrane. Functionally, part of the twin-arginine translocation (Tat) system that transports large folded proteins containing a characteristic twin-arginine motif in their signal peptide across membranes. TatA could form the protein-conducting channel of the Tat system. This is Sec-independent protein translocase protein TatA from Psychrobacter arcticus (strain DSM 17307 / VKM B-2377 / 273-4).